Here is a 911-residue protein sequence, read N- to C-terminus: Protein translocase subunit SecA (911 aa).

Residues Q87, 105–109, and D512 each bind ATP; that span reads GEGKT. Residues 561–571 are compositionally biased toward basic and acidic residues; sequence RHESRRIDNQL. Positions 561–583 are disordered; that stretch reads RHESRRIDNQLRGRSGRQGDPGS. 4 residues coordinate Zn(2+): C895, C897, C906, and H907.

Belongs to the SecA family. As to quaternary structure, monomer and homodimer. Part of the essential Sec protein translocation apparatus which comprises SecA, SecYEG and auxiliary proteins SecDF-YajC and YidC. It depends on Zn(2+) as a cofactor.

It is found in the cell inner membrane. The protein resides in the cytoplasm. It carries out the reaction ATP + H2O + cellular proteinSide 1 = ADP + phosphate + cellular proteinSide 2.. In terms of biological role, part of the Sec protein translocase complex. Interacts with the SecYEG preprotein conducting channel. Has a central role in coupling the hydrolysis of ATP to the transfer of proteins into and across the cell membrane, serving both as a receptor for the preprotein-SecB complex and as an ATP-driven molecular motor driving the stepwise translocation of polypeptide chains across the membrane. The protein is Protein translocase subunit SecA of Pseudomonas putida (strain W619).